We begin with the raw amino-acid sequence, 449 residues long: C4-dicarboxylate transport protein 1 (449 aa).

The next 9 membrane-spanning stretches (helical) occupy residues 14–34, 47–67, 83–103, 157–177, 195–215, 226–246, 312–332, 359–379, and 385–405; these read SIFL…VGIP, FIKL…VNGI, SVIY…VVAY, ILQV…VGEQ, IMGM…AFTT, LGAL…AVLG, FSIY…TPLA, VILA…LVLV, and FMGI…TVTI.

The protein belongs to the dicarboxylate/amino acid:cation symporter (DAACS) (TC 2.A.23) family.

The protein localises to the cell inner membrane. Responsible for the transport of dicarboxylates such as succinate, fumarate, and malate from the periplasm across the membrane. In Pseudomonas aeruginosa (strain UCBPP-PA14), this protein is C4-dicarboxylate transport protein 1.